Consider the following 145-residue polypeptide: Large ribosomal subunit protein uL15 (145 aa).

2 stretches are compositionally biased toward basic residues: residues 1–13 (MIRK…KQRG) and 22–33 (TKKRRGAGHRGG). The segment at 1–41 (MIRKTKKIRKQRGSRSVGGGCTKKRRGAGHRGGRGQAGGNK) is disordered.

This sequence belongs to the universal ribosomal protein uL15 family. In terms of assembly, part of the 50S ribosomal subunit.

In terms of biological role, binds to the 23S rRNA. The polypeptide is Large ribosomal subunit protein uL15 (Methanosphaera stadtmanae (strain ATCC 43021 / DSM 3091 / JCM 11832 / MCB-3)).